A 396-amino-acid chain; its full sequence is Growth-regulating factor 1 (396 aa).

A QLQ domain is found at 18–53 (PFTASQWQELEHQALIYKYMASGTPIPSDLILPLRR). 2 consecutive short sequence motifs (bipartite nuclear localization signal) follow at residues 86 to 105 (RKAE…KKWR) and 123 to 130 (RGKNRSRK). The WRC domain maps to 90 to 134 (DPEPGRCRRTDGKKWRCSKEAYPDSKYCEKHMHRGKNRSRKPVEM). The tract at residues 117–176 (CEKHMHRGKNRSRKPVEMSLATPPPPSSSATSAASNSSAGVAPTTTTTSSPAPSYSRPAP) is disordered. Residues 120 to 129 (HMHRGKNRSR) are compositionally biased toward basic residues. Low complexity predominate over residues 144-174 (SSATSAASNSSAGVAPTTTTTSSPAPSYSRP).

It belongs to the GRF family. Highly expressed in the intercalary meristem of the internode and in the shoot apex. Detected in the leaf primordia and emerging leaves in the uppermost node. Preferentially localized in the epidermis and in the tissues surrounding vascular bundles of the intercalary meristem of the internode and in adventitious roots of the second highest node. Low expression in the coleoptile and in the youngest leaf.

It is found in the nucleus. Its function is as follows. Transcription activator that plays a regulatory role in gibberellin-induced stem elongation. This chain is Growth-regulating factor 1 (GRF1), found in Oryza sativa subsp. indica (Rice).